The chain runs to 905 residues: Core protein VP3 (905 aa).

The protein belongs to the orbivirus VP3 family.

It localises to the virion. In terms of biological role, the VP3 protein is one of the five proteins (with VP1, VP4, VP6 and VP7) which form the inner capsid of the virus. The protein is Core protein VP3 (Segment-3) of African horse sickness virus 6 (AHSV-6).